The following is a 452-amino-acid chain: Probable 1,4-beta-D-glucan cellobiohydrolase A (452 aa).

Residues 1–17 form the signal peptide; sequence MHQRALLFSALLTAVRA. An N-linked (GlcNAc...) asparagine glycan is attached at asparagine 62. The active-site Nucleophile is glutamate 227. Catalysis depends on glutamate 232, which acts as the Proton donor. 4 N-linked (GlcNAc...) asparagine glycosylation sites follow: asparagine 285, asparagine 335, asparagine 402, and asparagine 445.

This sequence belongs to the glycosyl hydrolase 7 (cellulase C) family.

The protein resides in the secreted. The catalysed reaction is Hydrolysis of (1-&gt;4)-beta-D-glucosidic linkages in cellulose and cellotetraose, releasing cellobiose from the non-reducing ends of the chains.. Functionally, the biological conversion of cellulose to glucose generally requires three types of hydrolytic enzymes: (1) Endoglucanases which cut internal beta-1,4-glucosidic bonds; (2) Exocellobiohydrolases that cut the disaccharide cellobiose from the non-reducing end of the cellulose polymer chain; (3) Beta-1,4-glucosidases which hydrolyze the cellobiose and other short cello-oligosaccharides to glucose. This is Probable 1,4-beta-D-glucan cellobiohydrolase A (cbhA) from Aspergillus niger (strain ATCC MYA-4892 / CBS 513.88 / FGSC A1513).